The following is a 286-amino-acid chain: uncharacterized protein (286 aa).

The region spanning 26-268 (PLIILCHGFC…DACHYDIYEG (243 aa)) is the AB hydrolase-1 domain.

It to E.coli YcjY.

This is an uncharacterized protein from Escherichia coli.